The chain runs to 398 residues: Mannitol-1-phosphate 5-dehydrogenase (398 aa).

10 to 21 (AVHFGAGNIGRG) is a binding site for NAD(+). The active site involves K221.

Belongs to the mannitol dehydrogenase family. In terms of assembly, monomer.

It catalyses the reaction D-mannitol 1-phosphate + NAD(+) = beta-D-fructose 6-phosphate + NADH + H(+). Functionally, catalyzes the NAD(H)-dependent interconversion of D-fructose 6-phosphate and D-mannitol 1-phosphate in the mannitol metabolic pathway. The polypeptide is Mannitol-1-phosphate 5-dehydrogenase (Neurospora crassa (strain ATCC 24698 / 74-OR23-1A / CBS 708.71 / DSM 1257 / FGSC 987)).